The primary structure comprises 125 residues: S-adenosylmethionine decarboxylase proenzyme (125 aa).

The active-site Schiff-base intermediate with substrate; via pyruvic acid is serine 61. Residue serine 61 is modified to Pyruvic acid (Ser); by autocatalysis. Catalysis depends on histidine 66, which acts as the Proton acceptor; for processing activity. Catalysis depends on cysteine 81, which acts as the Proton donor; for catalytic activity.

The protein belongs to the prokaryotic AdoMetDC family. Type 1 subfamily. Heterotetramer of two alpha and two beta chains arranged as a dimer of alpha/beta heterodimers. Pyruvate is required as a cofactor. In terms of processing, is synthesized initially as an inactive proenzyme. Formation of the active enzyme involves a self-maturation process in which the active site pyruvoyl group is generated from an internal serine residue via an autocatalytic post-translational modification. Two non-identical subunits are generated from the proenzyme in this reaction, and the pyruvate is formed at the N-terminus of the alpha chain, which is derived from the carboxyl end of the proenzyme. The post-translation cleavage follows an unusual pathway, termed non-hydrolytic serinolysis, in which the side chain hydroxyl group of the serine supplies its oxygen atom to form the C-terminus of the beta chain, while the remainder of the serine residue undergoes an oxidative deamination to produce ammonia and the pyruvoyl group blocking the N-terminus of the alpha chain.

The enzyme catalyses S-adenosyl-L-methionine + H(+) = S-adenosyl 3-(methylsulfanyl)propylamine + CO2. It functions in the pathway amine and polyamine biosynthesis; S-adenosylmethioninamine biosynthesis; S-adenosylmethioninamine from S-adenosyl-L-methionine: step 1/1. Functionally, catalyzes the decarboxylation of S-adenosylmethionine to S-adenosylmethioninamine (dcAdoMet), the propylamine donor required for the synthesis of the polyamines spermine and spermidine from the diamine putrescine. The chain is S-adenosylmethionine decarboxylase proenzyme from Prochlorococcus marinus (strain MIT 9313).